The primary structure comprises 783 residues: Endonuclease MutS2 (783 aa).

Residue 328–335 (GPNTGGKT) participates in ATP binding. The Smr domain maps to 708–783 (LDLRGKRYEE…GSGCTIATLG (76 aa)).

It belongs to the DNA mismatch repair MutS family. MutS2 subfamily. As to quaternary structure, homodimer. Binds to stalled ribosomes, contacting rRNA.

In terms of biological role, endonuclease that is involved in the suppression of homologous recombination and thus may have a key role in the control of bacterial genetic diversity. Functionally, acts as a ribosome collision sensor, splitting the ribosome into its 2 subunits. Detects stalled/collided 70S ribosomes which it binds and splits by an ATP-hydrolysis driven conformational change. Acts upstream of the ribosome quality control system (RQC), a ribosome-associated complex that mediates the extraction of incompletely synthesized nascent chains from stalled ribosomes and their subsequent degradation. Probably generates substrates for RQC. This chain is Endonuclease MutS2, found in Streptococcus thermophilus (strain ATCC BAA-491 / LMD-9).